We begin with the raw amino-acid sequence, 513 residues long: Bifunctional purine biosynthesis protein PurH (513 aa).

Residues 1 to 144 (MKRALISVSD…KNYQDVTVVT (144 aa)) enclose the MGS-like domain.

Belongs to the PurH family.

The enzyme catalyses (6R)-10-formyltetrahydrofolate + 5-amino-1-(5-phospho-beta-D-ribosyl)imidazole-4-carboxamide = 5-formamido-1-(5-phospho-D-ribosyl)imidazole-4-carboxamide + (6S)-5,6,7,8-tetrahydrofolate. It carries out the reaction IMP + H2O = 5-formamido-1-(5-phospho-D-ribosyl)imidazole-4-carboxamide. It participates in purine metabolism; IMP biosynthesis via de novo pathway; 5-formamido-1-(5-phospho-D-ribosyl)imidazole-4-carboxamide from 5-amino-1-(5-phospho-D-ribosyl)imidazole-4-carboxamide (10-formyl THF route): step 1/1. The protein operates within purine metabolism; IMP biosynthesis via de novo pathway; IMP from 5-formamido-1-(5-phospho-D-ribosyl)imidazole-4-carboxamide: step 1/1. The protein is Bifunctional purine biosynthesis protein PurH of Lactobacillus acidophilus (strain ATCC 700396 / NCK56 / N2 / NCFM).